A 348-amino-acid chain; its full sequence is Maintenance of mitochondrial morphology protein 1 (348 aa).

Topologically, residues 1-35 (MAGKADLGHTGISDNIVERQIFVPQPNNAWSFTQG) are lumenal. A helical membrane pass occupies residues 36-56 (LMCGQASVVVVLLVFIKFFVF). Residues 57-348 (SEAPPSSGAA…GKTEKVNGNE (292 aa)) are Cytoplasmic-facing. The SMP-LTD domain occupies 114–323 (NPESLDWFNV…EPKFQVVRLP (210 aa)). The disordered stretch occupies residues 328–348 (RSKNTREPVGAGKTEKVNGNE).

Belongs to the MMM1 family. Homodimer. Component of the ER-mitochondria encounter structure (ERMES) or MDM complex, composed of MMM1, MDM10, MDM12 and MDM34. An MMM1 homodimer associates with one molecule of MDM12 on each side in a pairwise head-to-tail manner, and the SMP-LTD domains of MMM1 and MDM12 generate a continuous hydrophobic tunnel for phospholipid trafficking.

The protein localises to the endoplasmic reticulum membrane. Its function is as follows. Component of the ERMES/MDM complex, which serves as a molecular tether to connect the endoplasmic reticulum (ER) and mitochondria. Components of this complex are involved in the control of mitochondrial shape and protein biogenesis, and function in nonvesicular lipid trafficking between the ER and mitochondria. The MDM12-MMM1 subcomplex functions in the major beta-barrel assembly pathway that is responsible for biogenesis of all outer membrane beta-barrel proteins, and acts in a late step after the SAM complex. The MDM10-MDM12-MMM1 subcomplex further acts in the TOM40-specific pathway after the action of the MDM12-MMM1 complex. Essential for establishing and maintaining the structure of mitochondria and maintenance of mtDNA nucleoids. The protein is Maintenance of mitochondrial morphology protein 1 of Clavispora lusitaniae (strain ATCC 42720) (Yeast).